Reading from the N-terminus, the 536-residue chain is CTP synthase (536 aa).

Positions 1-267 (MTKFIFVTGG…DDIVIKRLQL (267 aa)) are amidoligase domain. Ser13 contributes to the CTP binding site. Ser13 lines the UTP pocket. 14–19 (SLGKGI) is a binding site for ATP. Position 54 (Tyr54) interacts with L-glutamine. Asp71 serves as a coordination point for ATP. Residues Asp71 and Glu141 each contribute to the Mg(2+) site. CTP-binding positions include 148-150 (DIE), 188-193 (KTKPTQ), and Lys224. UTP contacts are provided by residues 188–193 (KTKPTQ) and Lys224. An ATP-binding site is contributed by 240–242 (RDA). Residues 293–535 (TIGLVGKYVS…IEASLKYQQN (243 aa)) form the Glutamine amidotransferase type-1 domain. Gly355 is a binding site for L-glutamine. Cys382 functions as the Nucleophile; for glutamine hydrolysis in the catalytic mechanism. Residues 383–386 (LGMQ), Glu406, and Arg463 contribute to the L-glutamine site. Residues His508 and Glu510 contribute to the active site.

Belongs to the CTP synthase family. Homotetramer.

The catalysed reaction is UTP + L-glutamine + ATP + H2O = CTP + L-glutamate + ADP + phosphate + 2 H(+). It catalyses the reaction L-glutamine + H2O = L-glutamate + NH4(+). The enzyme catalyses UTP + NH4(+) + ATP = CTP + ADP + phosphate + 2 H(+). It functions in the pathway pyrimidine metabolism; CTP biosynthesis via de novo pathway; CTP from UDP: step 2/2. Its activity is regulated as follows. Allosterically activated by GTP, when glutamine is the substrate; GTP has no effect on the reaction when ammonia is the substrate. The allosteric effector GTP functions by stabilizing the protein conformation that binds the tetrahedral intermediate(s) formed during glutamine hydrolysis. Inhibited by the product CTP, via allosteric rather than competitive inhibition. Functionally, catalyzes the ATP-dependent amination of UTP to CTP with either L-glutamine or ammonia as the source of nitrogen. Regulates intracellular CTP levels through interactions with the four ribonucleotide triphosphates. The chain is CTP synthase from Staphylococcus aureus (strain COL).